Reading from the N-terminus, the 453-residue chain is Tubulin alpha chain (453 aa).

Position 11 (Gln11) interacts with GTP. Lys40 carries the N6-acetyllysine modification. The GTP site is built by Glu71, Gly144, Thr145, Thr179, Asn206, and Asn228. Glu71 contributes to the Mg(2+) binding site. Residue Glu254 is part of the active site.

Belongs to the tubulin family. Dimer of alpha and beta chains. A typical microtubule is a hollow water-filled tube with an outer diameter of 25 nm and an inner diameter of 15 nM. Alpha-beta heterodimers associate head-to-tail to form protofilaments running lengthwise along the microtubule wall with the beta-tubulin subunit facing the microtubule plus end conferring a structural polarity. Microtubules usually have 13 protofilaments but different protofilament numbers can be found in some organisms and specialized cells. It depends on Mg(2+) as a cofactor. Undergoes a tyrosination/detyrosination cycle, the cyclic removal and re-addition of a C-terminal tyrosine residue by the enzymes tubulin tyrosine carboxypeptidase (TTCP) and tubulin tyrosine ligase (TTL), respectively. In terms of processing, acetylation of alpha chains at Lys-40 stabilizes microtubules and affects affinity and processivity of microtubule motors. This modification has a role in multiple cellular functions, ranging from cell motility, cell cycle progression or cell differentiation to intracellular trafficking and signaling.

The protein localises to the cytoplasm. The protein resides in the cytoskeleton. The catalysed reaction is GTP + H2O = GDP + phosphate + H(+). Tubulin is the major constituent of microtubules, a cylinder consisting of laterally associated linear protofilaments composed of alpha- and beta-tubulin heterodimers. Microtubules grow by the addition of GTP-tubulin dimers to the microtubule end, where a stabilizing cap forms. Below the cap, tubulin dimers are in GDP-bound state, owing to GTPase activity of alpha-tubulin. This is Tubulin alpha chain (TUBA) from Neospora caninum (Coccidian parasite).